The sequence spans 741 residues: Protein O-mannosyl-transferase TMTC4 (741 aa).

Residues 1–14 (MAVLDTDLDHILPS) are Cytoplasmic-facing. The helical transmembrane segment at 15 to 35 (SVLPPFWAKLVVGSVAIVCFA) threads the bilayer. The Extracellular portion of the chain corresponds to 36–111 (RSYDGDFVFD…FHPVGFHVVN (76 aa)). A glycan (N-linked (GlcNAc...) asparagine) is linked at asparagine 78. A helical transmembrane segment spans residues 112–132 (ILLHSGISVLMVDVFSVLFGG). Residues 133-141 (LQYTSKGRR) are Cytoplasmic-facing. Residues 142 to 162 (LHLAPRASLLAALLFAVHPVH) traverse the membrane as a helical segment. Residues 163-165 (TEC) are Extracellular-facing. A helical transmembrane segment spans residues 166 to 186 (VAGVVGRADLLCALFFLLSFL). Topologically, residues 187 to 198 (GYCKAFRESNKE) are cytoplasmic. A helical transmembrane segment spans residues 199-219 (GAHSSTFWVLLSIFLGAVAML). At 220–224 (CKEQG) the chain is on the extracellular side. A helical membrane pass occupies residues 225-245 (ITVLGLNAVFDILVIGKFNVL). Residues 246-268 (EIVQKVLHKDKSLENLGMLRNGG) lie on the Cytoplasmic side of the membrane. The helical transmembrane segment at 269-288 (LLFRMTLLTSGGAGMLYVRW) threads the bilayer. At 289–354 (RIMGTGPPAF…PLIKSISDWR (66 aa)) the chain is on the extracellular side. A helical transmembrane segment spans residues 355 to 375 (VIALAALWFCLIGLICQALCS). Residues 376 to 382 (EDGHKRR) are Cytoplasmic-facing. Residues 383 to 403 (ILTLGLGFLVIPFLPASNLFF) form a helical membrane-spanning segment. Residues 404–412 (RVGFVVAER) lie on the Extracellular side of the membrane. Residues 413 to 433 (VLYLPSVGYCVLLTFGFGALS) form a helical membrane-spanning segment. Residues 434–440 (KHTKKKK) lie on the Cytoplasmic side of the membrane. A helical transmembrane segment spans residues 441 to 461 (LIAAVVLGILFINTLRCVLRS). The Extracellular segment spans residues 462-741 (GEWRSEEQLF…KLELMQKKAV (280 aa)). 7 TPR repeats span residues 482–515 (AKVH…NPKY), 516–549 (VHAM…QPDF), 550–583 (AAAW…RRKY), 584–617 (PDCY…KPEH), 618–651 (SLAW…IPND), 652–685 (HSLM…NPNA), and 686–719 (ASYH…DPTA). The N-linked (GlcNAc...) asparagine glycan is linked to asparagine 497. Asparagine 609 carries an N-linked (GlcNAc...) asparagine glycan.

Belongs to the TMTC family.

The protein resides in the membrane. It is found in the endoplasmic reticulum. The catalysed reaction is a di-trans,poly-cis-dolichyl beta-D-mannosyl phosphate + L-seryl-[protein] = 3-O-(alpha-D-mannosyl)-L-seryl-[protein] + a di-trans,poly-cis-dolichyl phosphate + H(+). The enzyme catalyses a di-trans,poly-cis-dolichyl beta-D-mannosyl phosphate + L-threonyl-[protein] = 3-O-(alpha-D-mannosyl)-L-threonyl-[protein] + a di-trans,poly-cis-dolichyl phosphate + H(+). The protein operates within protein modification; protein glycosylation. Its function is as follows. Transfers mannosyl residues to the hydroxyl group of serine or threonine residues. The 4 members of the TMTC family are O-mannosyl-transferases dedicated primarily to the cadherin superfamily, each member seems to have a distinct role in decorating the cadherin domains with O-linked mannose glycans at specific regions. Also acts as O-mannosyl-transferase on other proteins such as PDIA3. This is Protein O-mannosyl-transferase TMTC4 from Homo sapiens (Human).